A 131-amino-acid polypeptide reads, in one-letter code: Cyclin-dependent kinase 4 inhibitor B (131 aa).

ANK repeat units follow at residues 6–35 (GGDA…DPNR), 39–67 (FGRR…DPNC), 72–101 (TLTR…RLDV), and 105–131 (WGRL…TAGD).

This sequence belongs to the CDKN2 cyclin-dependent kinase inhibitor family. Heterodimer of CDKN2B with CDK4 or CDK6.

Functionally, interacts strongly with CDK4 and CDK6. Potent inhibitor. Potential effector of TGF-beta induced cell cycle arrest. This is Cyclin-dependent kinase 4 inhibitor B (CDKN2B) from Bos taurus (Bovine).